The sequence spans 197 residues: Gastrula zinc finger protein XlCGF17.1 (197 aa).

7 C2H2-type zinc fingers span residues 6–28 (ISCS…QMTH), 34–56 (YSCS…QKIH), 62–84 (FSCS…HRTH), 90–112 (FFCS…RRTH), 118–140 (FSCS…YRTH), 146–169 (FSCS…RRSH), and 175–197 (FSCS…LRTH).

This sequence belongs to the krueppel C2H2-type zinc-finger protein family.

The protein localises to the nucleus. Its function is as follows. May be involved in transcriptional regulation. The sequence is that of Gastrula zinc finger protein XlCGF17.1 from Xenopus laevis (African clawed frog).